Reading from the N-terminus, the 151-residue chain is 3-hydroxyacyl-[acyl-carrier-protein] dehydratase FabZ (151 aa).

His-56 is an active-site residue.

It belongs to the thioester dehydratase family. FabZ subfamily.

The protein localises to the cytoplasm. The enzyme catalyses a (3R)-hydroxyacyl-[ACP] = a (2E)-enoyl-[ACP] + H2O. Its function is as follows. Involved in unsaturated fatty acids biosynthesis. Catalyzes the dehydration of short chain beta-hydroxyacyl-ACPs and long chain saturated and unsaturated beta-hydroxyacyl-ACPs. In Rhodopseudomonas palustris (strain BisB18), this protein is 3-hydroxyacyl-[acyl-carrier-protein] dehydratase FabZ.